The sequence spans 337 residues: MLTLPFDESVVMPESQMCRKFARQCEDQKQIKKPESFPKQVVLRGKSIKRAPGEETEKEEEEEDREEEDENGLSRRRGLRKKKTTKLRLERVKFRRQEANARERNRMHGLNDALDNLRKVVPCYSKTQKLSKIETLRLAKNYIWALSEILRIGKRPDLLTFVQNLCKGLSQPTTNLVAGCLQLNARSFLMGQGGEAAHHTRSPYSTFYPPYHSPELATPPGHGTLDNSKSMKPYNYCSAYESFYESTSPECASPQFEGPLSPPPINYNGIFSLKQEETLDYGKNYNYGMHYCAVPPRGPLGQGAMFRLPTDSHFPYDLHLRSQSLTMQDELNAVFHN.

Residues 28-80 (QKQIKKPESFPKQVVLRGKSIKRAPGEETEKEEEEEDREEEDENGLSRRRGLR) form a disordered region. Residues 54 to 71 (EETEKEEEEEDREEEDEN) show a composition bias toward acidic residues. The short motif at 80-86 (RKKKTTK) is the Nuclear localization signal element. A bHLH domain is found at 94–146 (FRRQEANARERNRMHGLNDALDNLRKVVPCYSKTQKLSKIETLRLAKNYIWAL).

As to quaternary structure, efficient DNA binding requires dimerization with another bHLH protein. In terms of tissue distribution, specific to the nervous system of both embryos and adults. Highest levels in the cortical plate of the cerebrum.

The protein localises to the nucleus. In terms of biological role, activates E box-dependent transcription in collaboration with TCF3/E47. May be a trans-acting factor involved in the development and maintenance of the mammalian nervous system. Transactivates the promoter of its own gene. In Mus musculus (Mouse), this protein is Neurogenic differentiation factor 6 (Neurod6).